The following is a 126-amino-acid chain: Transcription antitermination protein NusB (126 aa).

This sequence belongs to the NusB family.

Involved in transcription antitermination. Required for transcription of ribosomal RNA (rRNA) genes. Binds specifically to the boxA antiterminator sequence of the ribosomal RNA (rrn) operons. The sequence is that of Transcription antitermination protein NusB from Oceanobacillus iheyensis (strain DSM 14371 / CIP 107618 / JCM 11309 / KCTC 3954 / HTE831).